The primary structure comprises 311 residues: Pyrimidine-specific ribonucleoside hydrolase RihA (311 aa).

H240 is a catalytic residue.

It belongs to the IUNH family. RihA subfamily.

Its function is as follows. Hydrolyzes cytidine or uridine to ribose and cytosine or uracil, respectively. This chain is Pyrimidine-specific ribonucleoside hydrolase RihA, found in Salmonella choleraesuis (strain SC-B67).